The following is a 183-amino-acid chain: Oligoribonuclease (183 aa).

The Exonuclease domain occupies 9 to 172 (LIWIDLEMTG…DDIRESIEEL (164 aa)). Tyr130 is an active-site residue.

The protein belongs to the oligoribonuclease family.

The protein resides in the cytoplasm. In terms of biological role, 3'-to-5' exoribonuclease specific for small oligoribonucleotides. This Haemophilus ducreyi (strain 35000HP / ATCC 700724) protein is Oligoribonuclease.